The sequence spans 421 residues: Zinc finger protein 57 (421 aa).

The region spanning 15–88 (VSYEDVAVSF…SCTGVFKGGP (74 aa)) is the KRAB domain. The segment at 90 to 113 (FFCLTCGKCFKKNTFLFNHQFPVR) adopts a C2H2-type 1; degenerate zinc-finger fold. C2H2-type zinc fingers lie at residues 140–162 (FFCNFCGKTYRDASGLSRHRRAH) and 168–190 (RSCPECGKCFRDQSEVNRHLKVH). Positions 191-221 (QNKPAASNQAGNQASNQRLKSRVPPTTPRSQ) are disordered. Over residues 195–207 (AASNQAGNQASNQ) the composition is skewed to low complexity. The segment at 264–286 (ISCPYCHITFTMRTCLLTHLKIH) adopts a C2H2-type 4 zinc-finger fold. The C2H2-type 5; degenerate zinc finger occupies 313–332 (YTCPVCDSSFRGKESLLDHL). The segment at 371–421 (GKRMESRRRRRKRACTENPETEGLSGKGRVAPWEMEGATSPESPVTEEDSD) is disordered.

The protein belongs to the krueppel C2H2-type zinc-finger protein family. In terms of tissue distribution, expressed in oocytes and in a subset of adult tissues. Expressed at high levels in testis, and at low levels in cerebellum. Present in sciatic nerve and spinal cord (at protein level).

The protein localises to the nucleus. In terms of biological role, transcription regulator required to maintain maternal and paternal gene imprinting, a process by which gene expression is restricted in a parent of origin-specific manner by epigenetic modification of genomic DNA and chromatin, including DNA methylation. Acts by controlling DNA methylation during the earliest multicellular stages of development at multiple imprinting control regions (ICRs). Acts together with ZNF445, but ZFP57 plays the predominant role in imprinting maintenance. In contrast, in humans, ZNF445 seems to be the major factor early embryonic imprinting maintenance. Required for the establishment of maternal methylation imprints at SNRPN locus. Acts as a transcriptional repressor in Schwann cells. Binds to a 5'-TGCCGC-3' consensus sequence and recognizes the methylated CpG within this element. This is Zinc finger protein 57 (Zfp57) from Mus musculus (Mouse).